We begin with the raw amino-acid sequence, 442 residues long: ATP-dependent RNA helicase SUB2 (442 aa).

Residues 59–87 (TGFRDFLLKPELLRAISDLGFEHPSEVQQ) carry the Q motif motif. In terms of domain architecture, Helicase ATP-binding spans 90–265 (IPQAILGTDV…KKFMQSPLEI (176 aa)). 103–110 (AKSGMGKT) lines the ATP pocket. Residues 212–215 (DECD) carry the DECD box motif. One can recognise a Helicase C-terminal domain in the interval 277 to 438 (GLQQFYLKLE…TLPETVDPAT (162 aa)).

Belongs to the DEAD box helicase family. DECD subfamily.

The protein localises to the nucleus. It catalyses the reaction ATP + H2O = ADP + phosphate + H(+). Its function is as follows. ATP-binding RNA helicase involved in transcription elongation and required for the export of mRNA out of the nucleus. SUB2 also plays a role in pre-mRNA splicing and spliceosome assembly. May be involved in rDNA and telomeric silencing, and maintenance of genome integrity. This chain is ATP-dependent RNA helicase SUB2 (SUB2), found in Cryptococcus neoformans var. neoformans serotype D (strain JEC21 / ATCC MYA-565) (Filobasidiella neoformans).